Consider the following 138-residue polypeptide: Chorion protein S16 (138 aa).

The signal sequence occupies residues 1 to 20 (MSATLRLLCLMACCVALAVA).

It belongs to the chorion protein S16 family.

It is found in the secreted. Its function is as follows. Chorion membrane (egg shell) protein; plays a role in protecting the egg from the environment. This Drosophila melanogaster (Fruit fly) protein is Chorion protein S16 (Cp16).